The primary structure comprises 607 residues: Major facilitator superfamily multidrug transporter mdrA (607 aa).

Helical transmembrane passes span 77-97, 110-130, 139-159, 170-190, 202-222, 229-249, 305-325, 342-362, 385-405, 413-433, 443-463, and 478-498; these read MTVA…TGGV, VATL…LLWA, QIIF…SAGA, FFAG…IADM, LFAA…GFLG, WVMG…TIFV, PIVF…YMLF, VSSL…TYSV, LPPT…FAWT, IVCI…FLGI, IFAA…GAVF, and WASS…FLFY. A disordered region spans residues 523–583; the sequence is EQMKQAPEPE…ASTRTASSLR (61 aa). Acidic residues predominate over residues 553-564; the sequence is DVSETESNVEEL. Residues 572-583 are compositionally biased toward low complexity; sequence SRASTRTASSLR.

Belongs to the major facilitator superfamily. DHA1 family. Polyamines/proton antiporter (TC 2.A.1.2.16) subfamily.

The protein localises to the cell membrane. Functionally, MFS transporter involved in the basal level of azole susceptibility. Confers resistance to voriconazole and, to a lesser extent, to fluconazole. This is Major facilitator superfamily multidrug transporter mdrA from Aspergillus fumigatus (strain ATCC MYA-4609 / CBS 101355 / FGSC A1100 / Af293) (Neosartorya fumigata).